A 364-amino-acid chain; its full sequence is DNA replication and repair protein RecF (364 aa).

30 to 37 lines the ATP pocket; the sequence is GNNAQGKT.

Belongs to the RecF family.

It localises to the cytoplasm. In terms of biological role, the RecF protein is involved in DNA metabolism; it is required for DNA replication and normal SOS inducibility. RecF binds preferentially to single-stranded, linear DNA. It also seems to bind ATP. In Streptococcus uberis (strain ATCC BAA-854 / 0140J), this protein is DNA replication and repair protein RecF.